The sequence spans 351 residues: Ribosomal RNA large subunit methyltransferase N (351 aa).

The active-site Proton acceptor is the Glu92. Residues Gly105 to Glu337 form the Radical SAM core domain. Residues Cys112 and Cys342 are joined by a disulfide bond. [4Fe-4S] cluster-binding residues include Cys119, Cys123, and Cys126. S-adenosyl-L-methionine-binding positions include Gly169–Glu170, Ser201, Ser224–His226, and Asn300. The active-site S-methylcysteine intermediate is Cys342.

It belongs to the radical SAM superfamily. RlmN family. [4Fe-4S] cluster is required as a cofactor.

The protein resides in the cytoplasm. The enzyme catalyses adenosine(2503) in 23S rRNA + 2 reduced [2Fe-2S]-[ferredoxin] + 2 S-adenosyl-L-methionine = 2-methyladenosine(2503) in 23S rRNA + 5'-deoxyadenosine + L-methionine + 2 oxidized [2Fe-2S]-[ferredoxin] + S-adenosyl-L-homocysteine. Specifically methylates position 2 of adenine 2503 in 23S rRNA. This Nitrosopumilus maritimus (strain SCM1) protein is Ribosomal RNA large subunit methyltransferase N.